Reading from the N-terminus, the 1044-residue chain is Spindle assembly checkpoint serine/threonine-protein kinase bub1 (1044 aa).

The BUB1 N-terminal domain maps to 36–204 (FQEELDIIEE…SSPFPPPRIV (169 aa)). Disordered regions lie at residues 209–259 (PVSS…PLLY), 317–343 (VHHDSSSSNVSPIYKNPVAEQSDTPTR), 404–446 (ESLE…SQEE), 484–555 (KNSN…DSNS), and 685–705 (IKPKAGGPGRRRSSNRHSLDG). Over residues 223–239 (QVFSDASSSRDSQNASD) the composition is skewed to polar residues. A compositionally biased stretch (polar residues) spans 430-442 (NSSNSGATSLTGR). Residues 504-518 (STLQEETATGTTSTT) show a composition bias toward low complexity. Positions 544–555 (RSPQYSTVDSNS) are enriched in polar residues. Thr-550 is modified (phosphothreonine). A Protein kinase domain is found at 718 to 1044 (LSVISKLGQG…LLKSIEKRKI (327 aa)). Ala-728, Phe-729, Ala-730, Lys-762, and Asp-809 together coordinate ATP. Asp-861 functions as the Proton acceptor in the catalytic mechanism. 3 residues coordinate ATP: Asp-865, Asn-866, and Asp-900.

The protein belongs to the protein kinase superfamily. Ser/Thr protein kinase family. BUB1 subfamily. In terms of assembly, part of the BUB1-BUB3 complex, composed of bub1 and bub3. Interacts with spc7 (when phosphorylated on MELT motifs); to recruit the bub1-bub3 complex to kinetochores. Interacts with mad3. In terms of processing, autophosphorylated.

It localises to the nucleus. The protein localises to the chromosome. The protein resides in the centromere. It is found in the kinetochore. The catalysed reaction is L-seryl-[protein] + ATP = O-phospho-L-seryl-[protein] + ADP + H(+). It carries out the reaction L-threonyl-[protein] + ATP = O-phospho-L-threonyl-[protein] + ADP + H(+). Functionally, involved in mitotic spindle assembly checkpoint signaling, a process that delays anaphase until chromosomes are bioriented on the spindle, and in the repair of incorrect mitotic kinetochore-spindle microtubule attachments. Acts as a kinetochore scaffold for the recruitment of other spindle assembly checkpoint components. The polypeptide is Spindle assembly checkpoint serine/threonine-protein kinase bub1 (Schizosaccharomyces pombe (strain 972 / ATCC 24843) (Fission yeast)).